Here is a 113-residue protein sequence, read N- to C-terminus: Iron-sulfur cluster insertion protein ErpA (113 aa).

Residues cysteine 41, cysteine 105, and cysteine 107 each contribute to the iron-sulfur cluster site.

It belongs to the HesB/IscA family. In terms of assembly, homodimer. It depends on iron-sulfur cluster as a cofactor.

In terms of biological role, required for insertion of 4Fe-4S clusters for at least IspG. This Mannheimia succiniciproducens (strain KCTC 0769BP / MBEL55E) protein is Iron-sulfur cluster insertion protein ErpA.